The chain runs to 442 residues: 26S proteasome regulatory subunit 6A (442 aa).

A Phosphoserine modification is found at Ser-12. Residue 230-237 coordinates ATP; it reads GPPGTGKT. Residue Ser-379 is modified to Phosphoserine.

It belongs to the AAA ATPase family. In terms of assembly, component of the 19S proteasome regulatory particle complex. The 26S proteasome consists of a 20S core particle (CP) and two 19S regulatory subunits (RP). The regulatory particle is made of a lid composed of 9 subunits, a base containing 6 ATPases including PSMC3 and few additional components. Interacts with PAAF1.

The protein resides in the cytoplasm. It localises to the nucleus. In terms of biological role, component of the 26S proteasome, a multiprotein complex involved in the ATP-dependent degradation of ubiquitinated proteins. This complex plays a key role in the maintenance of protein homeostasis by removing misfolded or damaged proteins, which could impair cellular functions, and by removing proteins whose functions are no longer required. Therefore, the proteasome participates in numerous cellular processes, including cell cycle progression, apoptosis, or DNA damage repair. PSMC3 belongs to the heterohexameric ring of AAA (ATPases associated with diverse cellular activities) proteins that unfolds ubiquitinated target proteins that are concurrently translocated into a proteolytic chamber and degraded into peptides. This Mus musculus (Mouse) protein is 26S proteasome regulatory subunit 6A (Psmc3).